The sequence spans 116 residues: NADH-ubiquinone oxidoreductase chain 3 (116 aa).

3 helical membrane-spanning segments follow: residues 4 to 24 (IIFL…AAHA), 56 to 76 (FFLV…LFPL), and 88 to 108 (LIPI…FEWI).

This sequence belongs to the complex I subunit 3 family.

It localises to the mitochondrion membrane. It carries out the reaction a ubiquinone + NADH + 5 H(+)(in) = a ubiquinol + NAD(+) + 4 H(+)(out). Functionally, core subunit of the mitochondrial membrane respiratory chain NADH dehydrogenase (Complex I) that is believed to belong to the minimal assembly required for catalysis. Complex I functions in the transfer of electrons from NADH to the respiratory chain. The immediate electron acceptor for the enzyme is believed to be ubiquinone. The protein is NADH-ubiquinone oxidoreductase chain 3 (ND3) of Strongylocentrotus purpuratus (Purple sea urchin).